The sequence spans 545 residues: CTP synthase (545 aa).

The interval 1–266 (MTTNYIFVTG…DDYICKRFSL (266 aa)) is amidoligase domain. Ser-14 contributes to the CTP binding site. UTP is bound at residue Ser-14. Residues 15-20 (SLGKGI) and Asp-72 contribute to the ATP site. Mg(2+) contacts are provided by Asp-72 and Glu-140. Residues 147–149 (DIE), 187–192 (KTKPTQ), and Lys-223 each bind CTP. UTP is bound by residues 187-192 (KTKPTQ) and Lys-223. ATP is bound at residue 239 to 241 (KDV). The region spanning 291–542 (TIGMVGKYIE…VKAASEYQKR (252 aa)) is the Glutamine amidotransferase type-1 domain. An L-glutamine-binding site is contributed by Gly-352. The Nucleophile; for glutamine hydrolysis role is filled by Cys-379. Residues 380-383 (LGMQ), Glu-403, and Arg-470 each bind L-glutamine. Active-site residues include His-515 and Glu-517.

It belongs to the CTP synthase family. In terms of assembly, homotetramer.

The enzyme catalyses UTP + L-glutamine + ATP + H2O = CTP + L-glutamate + ADP + phosphate + 2 H(+). It carries out the reaction L-glutamine + H2O = L-glutamate + NH4(+). It catalyses the reaction UTP + NH4(+) + ATP = CTP + ADP + phosphate + 2 H(+). It participates in pyrimidine metabolism; CTP biosynthesis via de novo pathway; CTP from UDP: step 2/2. Allosterically activated by GTP, when glutamine is the substrate; GTP has no effect on the reaction when ammonia is the substrate. The allosteric effector GTP functions by stabilizing the protein conformation that binds the tetrahedral intermediate(s) formed during glutamine hydrolysis. Inhibited by the product CTP, via allosteric rather than competitive inhibition. In terms of biological role, catalyzes the ATP-dependent amination of UTP to CTP with either L-glutamine or ammonia as the source of nitrogen. Regulates intracellular CTP levels through interactions with the four ribonucleotide triphosphates. This is CTP synthase from Enterobacter sp. (strain 638).